The chain runs to 254 residues: Demethylmenaquinone methyltransferase (254 aa).

S-adenosyl-L-methionine-binding positions include Thr-62, Asp-80, 122-123 (DG), and Ser-139.

The protein belongs to the class I-like SAM-binding methyltransferase superfamily. MenG/UbiE family.

It catalyses the reaction a 2-demethylmenaquinol + S-adenosyl-L-methionine = a menaquinol + S-adenosyl-L-homocysteine + H(+). It participates in quinol/quinone metabolism; menaquinone biosynthesis; menaquinol from 1,4-dihydroxy-2-naphthoate: step 2/2. In terms of biological role, methyltransferase required for the conversion of demethylmenaquinol (DMKH2) to menaquinol (MKH2). The sequence is that of Demethylmenaquinone methyltransferase from Parafrankia sp. (strain EAN1pec).